A 69-amino-acid chain; its full sequence is Large ribosomal subunit protein uL29 (69 aa).

It belongs to the universal ribosomal protein uL29 family.

In Rhodopseudomonas palustris (strain TIE-1), this protein is Large ribosomal subunit protein uL29.